Consider the following 352-residue polypeptide: Guanidino acid hydrolase, mitochondrial (352 aa).

The transit peptide at Met1–Gln35 directs the protein to the mitochondrion. Residues Arg11–Phe49 are disordered. Residues His162, Asp185, His187, and Asp189 each contribute to the Mn(2+) site. Lys193 is subject to N6-acetyllysine. Lys217 is subject to N6-acetyllysine; alternate. At Lys217 the chain carries N6-succinyllysine; alternate. Positions 276 and 278 each coordinate Mn(2+).

It belongs to the ureohydrolase superfamily. Arginase family. Requires Mn(2+) as cofactor. Highly expressed in liver and kidney. Also found in skeletal muscle, fetal liver, brain, testis, skin and the gastrointestinal tract. Within brain, expression is higher in the cerebral cortex with lower levels in the medulla and spinal cord.

The protein resides in the mitochondrion. The enzyme catalyses 3-guanidinopropanoate + H2O = urea + beta-alanine. It carries out the reaction 4-guanidinobutanoate + H2O = urea + 4-aminobutanoate. It catalyses the reaction taurocyamine + H2O = urea + taurine. The catalysed reaction is L-arginine + H2O = urea + L-ornithine. The protein operates within nitrogen metabolism; urea cycle; L-ornithine and urea from L-arginine: step 1/1. In terms of biological role, hydrolyzes linear guanidino acids to form urea and the corresponding amines. Displays specificity for substrates having a negatively charged head group and short chains including taurocyamine, guanidino propanoic and butanoic acids. May protect cells by detoxifying potentially harmful amounts of guanidino acids. Metabolizes L-arginine with low efficiency. This is Guanidino acid hydrolase, mitochondrial (AGMAT) from Homo sapiens (Human).